A 199-amino-acid chain; its full sequence is Recombination protein RecR (199 aa).

The segment at 58-73 adopts a C4-type zinc-finger fold; that stretch reads CRRCFNLTEGEECDIC. A Toprim domain is found at 81-176; it reads SVICVVEDPY…RVTALASGLP (96 aa).

The protein belongs to the RecR family.

In terms of biological role, may play a role in DNA repair. It seems to be involved in an RecBC-independent recombinational process of DNA repair. It may act with RecF and RecO. This is Recombination protein RecR from Rubrobacter xylanophilus (strain DSM 9941 / JCM 11954 / NBRC 16129 / PRD-1).